The chain runs to 272 residues: Phosphate import ATP-binding protein PstB 2 (272 aa).

One can recognise an ABC transporter domain in the interval 26 to 267 (IEINNLCLNY…PIHKQTEDYI (242 aa)). 58–65 (GPSGCGKS) lines the ATP pocket.

This sequence belongs to the ABC transporter superfamily. Phosphate importer (TC 3.A.1.7) family. The complex is composed of two ATP-binding proteins (PstB), two transmembrane proteins (PstC and PstA) and a solute-binding protein (PstS).

The protein resides in the cell inner membrane. The enzyme catalyses phosphate(out) + ATP + H2O = ADP + 2 phosphate(in) + H(+). Functionally, part of the ABC transporter complex PstSACB involved in phosphate import. Responsible for energy coupling to the transport system. This is Phosphate import ATP-binding protein PstB 2 from Aliivibrio fischeri (strain ATCC 700601 / ES114) (Vibrio fischeri).